A 639-amino-acid chain; its full sequence is Probable potassium transport system protein Kup 1 (639 aa).

Helical transmembrane passes span 27 to 47, 64 to 84, 115 to 135, 151 to 171, 182 to 202, 225 to 245, 261 to 281, 293 to 313, 351 to 371, 377 to 397, 408 to 428, and 430 to 450; these read AILG…LYAF, VIGL…FKYI, VLIV…MITP, PAMD…LFAI, FFGP…LIHI, GFYG…AEAL, WFCL…ALVL, LMFP…ATII, IYLP…VLTF, LATA…LMFF, IWLA…FLGA, and LLKI…FTVI.

Belongs to the HAK/KUP transporter (TC 2.A.72) family.

It localises to the cell inner membrane. It carries out the reaction K(+)(in) + H(+)(in) = K(+)(out) + H(+)(out). Transport of potassium into the cell. Likely operates as a K(+):H(+) symporter. The protein is Probable potassium transport system protein Kup 1 of Agrobacterium fabrum (strain C58 / ATCC 33970) (Agrobacterium tumefaciens (strain C58)).